Consider the following 245-residue polypeptide: Probable membrane transporter protein YdhB (245 aa).

8 helical membrane-spanning segments follow: residues 1-21 (MLII…GAGG), 34-56 (HIPI…LSGA), 71-91 (LIVG…TSFI), 98-118 (YLTA…LFIL), 137-157 (ILGI…APFI), 177-197 (MLVI…EGFV), 199-219 (YVLL…GAKF), and 225-245 (KVVL…LLLF).

It belongs to the 4-toluene sulfonate uptake permease (TSUP) (TC 2.A.102) family.

The protein resides in the cell membrane. This chain is Probable membrane transporter protein YdhB (ydhB), found in Bacillus subtilis (strain 168).